Reading from the N-terminus, the 106-residue chain is Nucleoid-associated protein DIP0260 (106 aa).

It belongs to the YbaB/EbfC family. Homodimer.

Its subcellular location is the cytoplasm. It is found in the nucleoid. In terms of biological role, binds to DNA and alters its conformation. May be involved in regulation of gene expression, nucleoid organization and DNA protection. The chain is Nucleoid-associated protein DIP0260 from Corynebacterium diphtheriae (strain ATCC 700971 / NCTC 13129 / Biotype gravis).